The primary structure comprises 152 residues: Ribonuclease H (152 aa).

An RNase H type-1 domain is found at 1-142; sequence MDSKVVIYTD…ADKLAVQGRE (142 aa). Positions 10, 48, 70, and 134 each coordinate Mg(2+).

This sequence belongs to the RNase H family. Monomer. Mg(2+) serves as cofactor.

It localises to the cytoplasm. It carries out the reaction Endonucleolytic cleavage to 5'-phosphomonoester.. Endonuclease that specifically degrades the RNA of RNA-DNA hybrids. This Rickettsia felis (strain ATCC VR-1525 / URRWXCal2) (Rickettsia azadi) protein is Ribonuclease H.